Consider the following 118-residue polypeptide: uncharacterized protein (118 aa).

This is an uncharacterized protein from Escherichia coli (strain UTI89 / UPEC).